The following is a 248-amino-acid chain: Inner membrane protein pE248R (248 aa).

Residue Gly2 is the site of N-myristoyl glycine; by host attachment. Residues Gly2–Asn199 are Cytoplasmic-facing. Residues Ile200–Phe220 traverse the membrane as a helical segment. At Leu221–Ser248 the chain is on the extracellular side.

This sequence belongs to the asfivirus E248R family. In terms of assembly, interacts with A151R.

The protein resides in the host membrane. The protein localises to the virion membrane. Functionally, essential for viral fusion with host endosomal membrane and core release. In Ornithodoros (relapsing fever ticks), this protein is Inner membrane protein pE248R.